The chain runs to 55 residues: Hirustasin (55 aa).

5 cysteine pairs are disulfide-bonded: Cys-6/Cys-17, Cys-11/Cys-22, Cys-24/Cys-44, Cys-29/Cys-48, and Cys-33/Cys-50. The Antistasin-like domain occupies 24–50 (CNEVHCRIRCKYGLKKDENGCEYPCSC).

Belongs to the protease inhibitor I15 (antistasin) family.

Its subcellular location is the secreted. In terms of biological role, acts as an inhibitor of tissue kallikrein, trypsin, chymotrypsin and neutrophil cathepsin G. The sequence is that of Hirustasin from Hirudo medicinalis (Medicinal leech).